A 284-amino-acid polypeptide reads, in one-letter code: uncharacterized protein (284 aa).

The 130-residue stretch at 4–133 folds into the Photolyase/cryptochrome alpha/beta domain; the sequence is PLHLFWHRRD…AVHRQWDQLL (130 aa).

This is an uncharacterized protein from Synechococcus sp. (strain PCC 6716).